The chain runs to 316 residues: Ecto-ADP-ribosyltransferase 5 (316 aa).

The signal sequence occupies residues 1–23 (MIQATLLISLSCLSFYTLGSGVR). Residues cysteine 50 and cysteine 266 are joined by a disulfide bond. The N-linked (GlcNAc...) asparagine glycan is linked to asparagine 68. The TR mART core domain maps to 70–261 (TRLRESWETA…MTLSSSDQMC (192 aa)). Residue tyrosine 107 coordinates NAD(+). Asparagine 109 is a glycosylation site (N-linked (GlcNAc...) asparagine). Residues arginine 168 and glutamine 188 each coordinate NAD(+). Arginine 168 is an active-site residue. Serine 191 is a catalytic residue. Serine 222 is an NAD(+) binding site. Glutamate 229 is an active-site residue. N-linked (GlcNAc...) asparagine glycans are attached at residues asparagine 242 and asparagine 248.

The protein belongs to the Arg-specific ADP-ribosyltransferase family.

It is found in the secreted. It localises to the membrane. It carries out the reaction L-arginyl-[protein] + NAD(+) = N(omega)-(ADP-D-ribosyl)-L-arginyl-[protein] + nicotinamide + H(+). In Bos taurus (Bovine), this protein is Ecto-ADP-ribosyltransferase 5 (ART5).